We begin with the raw amino-acid sequence, 163 residues long: Phosphopantetheine adenylyltransferase (163 aa).

A substrate-binding site is contributed by S8. Residues 8–9 (SF) and H16 each bind ATP. Residues K40, T72, and R86 each coordinate substrate. Residues 87–89 (GLR), E97, and 122–128 (HSFLSSS) contribute to the ATP site.

The protein belongs to the bacterial CoaD family. As to quaternary structure, homohexamer. The cofactor is Mg(2+).

The protein localises to the cytoplasm. The catalysed reaction is (R)-4'-phosphopantetheine + ATP + H(+) = 3'-dephospho-CoA + diphosphate. The protein operates within cofactor biosynthesis; coenzyme A biosynthesis; CoA from (R)-pantothenate: step 4/5. Reversibly transfers an adenylyl group from ATP to 4'-phosphopantetheine, yielding dephospho-CoA (dPCoA) and pyrophosphate. The protein is Phosphopantetheine adenylyltransferase of Synechococcus sp. (strain CC9902).